A 99-amino-acid polypeptide reads, in one-letter code: MYIERLLKVIKAPHVSEKSSIALDKNNVIVLKVVNYVTKQDIRHAVCMLFSVKIKKINVLMVSGKSKGQRYNLGYRCNWKKAYVILKRGYTVDLMNMEQ.

It belongs to the universal ribosomal protein uL23 family. As to quaternary structure, part of the 50S ribosomal subunit. Contacts protein L29, and trigger factor when it is bound to the ribosome.

Its function is as follows. One of the early assembly proteins it binds 23S rRNA. One of the proteins that surrounds the polypeptide exit tunnel on the outside of the ribosome. Forms the main docking site for trigger factor binding to the ribosome. In Blochmanniella floridana, this protein is Large ribosomal subunit protein uL23.